A 416-amino-acid chain; its full sequence is Adrenocortical dysplasia protein (416 aa).

The short motif at P11–I13 is the PWI element. At S25 the chain carries Phosphoserine. Residues E156–R245 form an interaction with POT1 region. The segment covering I234–P251 has biased composition (polar residues). The tract at residues I234–S306 is disordered. Positions S259–S272 are enriched in low complexity. Over residues D273–R292 the composition is skewed to polar residues. Phosphoserine is present on residues S313 and S317. K345 is covalently cross-linked (Glycyl lysine isopeptide (Lys-Gly) (interchain with G-Cter in SUMO2)).

Component of the shelterin complex (telosome) composed of TERF1, TERF2, TINF2, TERF2IP ACD and POT1. Forms heterodimers with POT1. Identified in a complex with POT1 and single-stranded telomeric DNA. Interacts with STN1 and TINF2. As to expression, ubiquitous.

The protein localises to the nucleus. It localises to the chromosome. The protein resides in the telomere. Its function is as follows. Component of the shelterin complex (telosome) that is involved in the regulation of telomere length and protection. Shelterin associates with arrays of double-stranded TTAGGG repeats added by telomerase and protects chromosome ends. Without its protective activity, telomeres are no longer hidden from the DNA damage surveillance and chromosome ends are inappropriately processed by DNA repair pathways. Promotes binding of POT1 to single-stranded telomeric DNA. Modulates the inhibitory effects of POT1 on telomere elongation. The ACD-POT1 heterodimer enhances telomere elongation by recruiting telomerase to telomeres and increasing its processivity. May play a role in organogenesis. The protein is Adrenocortical dysplasia protein of Mus musculus (Mouse).